An 89-amino-acid chain; its full sequence is ATP synthase subunit e, mitochondrial (89 aa).

At serine 1 the chain carries N-acetylserine. A helical transmembrane segment spans residues 8 to 25; sequence YSSLAAGIVYGAYHTYTL.

In terms of assembly, F-type ATP synthases have 2 components, the catalytic core F(1) and the membrane-embedded component F(0), linked together by a central stalk and a peripheral stalk. The central stalk, also called rotor shaft, is often seen as part of F(1). The peripheral stalk is seen as part of F(0). F(0) contains the membrane channel next to the rotor. F-type ATP synthases form dimers but each monomer functions independently in ATP generation. The dimer consists of 18 different polypeptides: ATP1 (subunit alpha, part of F(1), 3 molecules per monomer), ATP2 (subunit beta, part of F(1), 3 molecules per monomer), ATP3 (subunit gamma, part of the central stalk), ATP4 (subunit b, part of the peripheral stalk), ATP5/OSCP (subunit 5/OSCP, part of the peripheral stalk), ATP6 (subunit a, part of the peripheral stalk), ATP7 (subunit d, part of the peripheral stalk), ATP8 (subunit 8, part of the peripheral stalk), OLI1 (subunit c, part of the rotor, 10 molecules per monomer), ATP14 (subunit h, part of the peripheral stalk), ATP15 (subunit epsilon, part of the central stalk), ATP16 (subunit delta, part of the central stalk), ATP17 (subunit f, part of the peripheral stalk), ATP18 (subunit i/j, part of the peripheral stalk). Dimer-specific subunits are ATP19 (subunit k, at interface between monomers), ATP20 (subunit g, at interface between monomers), TIM11 (subunit e, at interface between monomers). Also contains subunit L.

It localises to the mitochondrion inner membrane. In terms of biological role, mitochondrial membrane ATP synthase (F(1)F(0) ATP synthase or Complex V) produces ATP from ADP in the presence of a proton gradient across the membrane which is generated by electron transport complexes of the respiratory chain. F-type ATP synthases consist of two structural domains, F(1) - containing the extramembraneous catalytic core, and F(0) - containing the membrane proton channel, linked together by a central stalk and a peripheral stalk. During catalysis, ATP synthesis in the catalytic domain of F(1) is coupled via a rotary mechanism of the central stalk subunits to proton translocation. Part of the complex F(0) domain. Minor subunit located with subunit a/ATP6 in the membrane. Together with subunit g/ATP20, probably contributes to membrane curvature at the site of the ATP synthase dimer, ultimately contributing to formation of cristae. The sequence is that of ATP synthase subunit e, mitochondrial from Pichia angusta (Yeast).